Reading from the N-terminus, the 990-residue chain is Leucine--tRNA ligase (990 aa).

The short motif at 74 to 85 (PYPSGKGLHVGH) is the 'HIGH' region element. The interval 573 to 602 (LPINLPDVPDYSPKTFDPEDAESDPEAPLS) is disordered. Residues 763 to 767 (KMGKS) carry the 'KMSKS' region motif. Position 766 (Lys766) interacts with ATP.

It belongs to the class-I aminoacyl-tRNA synthetase family.

Its subcellular location is the cytoplasm. The catalysed reaction is tRNA(Leu) + L-leucine + ATP = L-leucyl-tRNA(Leu) + AMP + diphosphate. The chain is Leucine--tRNA ligase from Bifidobacterium adolescentis (strain ATCC 15703 / DSM 20083 / NCTC 11814 / E194a).